The chain runs to 370 residues: 3-isopropylmalate dehydrogenase (370 aa).

77–90 (GPKWDAVPYEVRPE) provides a ligand contact to NAD(+). Arginine 97, arginine 107, arginine 135, and aspartate 226 together coordinate substrate. 3 residues coordinate Mg(2+): aspartate 226, aspartate 250, and aspartate 254. NAD(+) is bound at residue 290 to 302 (GSAPDIAGTGVAN).

It belongs to the isocitrate and isopropylmalate dehydrogenases family. LeuB type 1 subfamily. In terms of assembly, homodimer. Requires Mg(2+) as cofactor. Mn(2+) is required as a cofactor.

It is found in the cytoplasm. The catalysed reaction is (2R,3S)-3-isopropylmalate + NAD(+) = 4-methyl-2-oxopentanoate + CO2 + NADH. The protein operates within amino-acid biosynthesis; L-leucine biosynthesis; L-leucine from 3-methyl-2-oxobutanoate: step 3/4. Catalyzes the oxidation of 3-carboxy-2-hydroxy-4-methylpentanoate (3-isopropylmalate) to 3-carboxy-4-methyl-2-oxopentanoate. The product decarboxylates to 4-methyl-2 oxopentanoate. This Rhizobium meliloti (strain 1021) (Ensifer meliloti) protein is 3-isopropylmalate dehydrogenase.